The following is a 506-amino-acid chain: Maturase K (506 aa).

It belongs to the intron maturase 2 family. MatK subfamily.

It localises to the plastid. It is found in the chloroplast. Its function is as follows. Usually encoded in the trnK tRNA gene intron. Probably assists in splicing its own and other chloroplast group II introns. The polypeptide is Maturase K (Lathyrus sativus (White vetchling)).